Consider the following 131-residue polypeptide: Hydrophilin PGA14 (131 aa).

The first 18 residues, 1–18 (MKFTTVATVFAISSLAAA), serve as a signal peptide directing secretion. 2 stretches are compositionally biased toward basic and acidic residues: residues 42 to 59 (YGRF…ETGT) and 79 to 96 (KESD…RDSK). The tract at residues 42–110 (YGRFDKTSRS…NSTTSSGNNG (69 aa)) is disordered. N-linked (GlcNAc...) asparagine glycosylation is found at Asn97 and Asn101. Over residues 97 to 110 (NASSNSTTSSGNNG) the composition is skewed to low complexity. Ser105 carries GPI-anchor amidated serine lipidation. Positions 106 to 131 (SGNNGVATGVSLGLAGVLAVGAALVI) are cleaved as a propeptide — removed in mature form.

The protein belongs to the PGA14 family. The GPI-anchor is attached to the protein in the endoplasmic reticulum and serves to target the protein to the cell surface. There, the glucosamine-inositol phospholipid moiety is cleaved off and the GPI-modified mannoprotein is covalently attached via its lipidless GPI glycan remnant to the 1,6-beta-glucan of the outer cell wall layer.

It is found in the secreted. The protein resides in the cell wall. It localises to the membrane. Its function is as follows. Hydrophilin which is essential to overcome the simple stress of the desiccation-rehydration process. This chain is Hydrophilin PGA14 (PGA14), found in Candida albicans (strain SC5314 / ATCC MYA-2876) (Yeast).